The sequence spans 188 residues: Small ribosomal subunit protein uS7 (188 aa).

The protein belongs to the universal ribosomal protein uS7 family. In terms of assembly, part of the 30S ribosomal subunit.

One of the primary rRNA binding proteins, it binds directly to 16S rRNA where it nucleates assembly of the head domain of the 30S subunit. Is located at the subunit interface close to the decoding center. The sequence is that of Small ribosomal subunit protein uS7 from Methanococcus maripaludis (strain C7 / ATCC BAA-1331).